We begin with the raw amino-acid sequence, 1607 residues long: Thrombospondin type-1 domain-containing protein 7B (1607 aa).

The signal sequence occupies residues 1–31 (MFLRSDLAVTHWVSRSMRKLFLVLSLLLSQA). Topologically, residues 32 to 1556 (AHLEGRKDNQ…QPLDPDGRVK (1525 aa)) are extracellular. TSP type-1 domains follow at residues 40–98 (NQFL…RVCD), 102–177 (DLFQ…IPCP), 179–233 (DCVV…VSCP), 336–392 (DCET…IAEG), 399–482 (PRYS…VPCS), 484–543 (DCIV…PMCH), 601–661 (DCVV…HSCT), 662–735 (QLYW…LPCK), 737–796 (DCLV…SLCP), 797–869 (SYRW…IPCR), 871–924 (DCTF…CPCD), 925–999 (TFMS…IPCP), 1001–1126 (DCKL…LLCP), 1128–1182 (ECVM…ENCF), 1183–1246 (QFQY…VECV), 1248–1303 (NCQL…TPCY), 1304–1369 (SWVL…VPCP), and 1371–1432 (DCHI…GKCY). N-linked (GlcNAc...) asparagine glycosylation is found at asparagine 150 and asparagine 219. 3 disulfide bridges follow: cysteine 411–cysteine 477, cysteine 431–cysteine 481, and cysteine 442–cysteine 466. Disulfide bonds link cysteine 602–cysteine 643, cysteine 613–cysteine 617, and cysteine 655–cysteine 660. An N-linked (GlcNAc...) asparagine glycan is attached at asparagine 683. Intrachain disulfides connect cysteine 738–cysteine 779, cysteine 749–cysteine 753, and cysteine 789–cysteine 795. N-linked (GlcNAc...) asparagine glycosylation occurs at asparagine 757. Asparagine 842 is a glycosylation site (N-linked (GlcNAc...) asparagine). An N-linked (GlcNAc...) asparagine glycan is attached at asparagine 933. Intrachain disulfides connect cysteine 937-cysteine 994, cysteine 960-cysteine 998, cysteine 971-cysteine 984, cysteine 1002-cysteine 1039, and cysteine 1013-cysteine 1017. Asparagine 985 carries N-linked (GlcNAc...) asparagine glycosylation. An N-linked (GlcNAc...) asparagine glycan is attached at asparagine 1105. An intrachain disulfide couples cysteine 1121 to cysteine 1125. N-linked (GlcNAc...) asparagine glycans are attached at residues asparagine 1187 and asparagine 1199. Disulfide bonds link cysteine 1249-cysteine 1287, cysteine 1260-cysteine 1264, and cysteine 1297-cysteine 1302. 2 N-linked (GlcNAc...) asparagine glycosylation sites follow: asparagine 1309 and asparagine 1335. Cystine bridges form between cysteine 1372/cysteine 1416, cysteine 1383/cysteine 1387, and cysteine 1426/cysteine 1431. Residues asparagine 1457 and asparagine 1525 are each glycosylated (N-linked (GlcNAc...) asparagine). Residues 1557-1577 (MWVYGVSGGSFLIMIFLVFTS) form a helical membrane-spanning segment. At 1578-1607 (YLVCKKPKPHQSTPRHQKPLTLAYDGDLDM) the chain is on the cytoplasmic side.

The protein resides in the membrane. The polypeptide is Thrombospondin type-1 domain-containing protein 7B (Mus musculus (Mouse)).